The chain runs to 277 residues: Small ribosomal subunit protein uS2 (277 aa).

2 stretches are compositionally biased toward basic and acidic residues: residues Gln-227–Ala-256 and Ser-267–Ala-277. The segment at Gln-227–Ala-277 is disordered.

This sequence belongs to the universal ribosomal protein uS2 family.

This chain is Small ribosomal subunit protein uS2, found in Corynebacterium jeikeium (strain K411).